The primary structure comprises 256 residues: Small ribosomal subunit protein uS2 (256 aa).

It belongs to the universal ribosomal protein uS2 family.

This is Small ribosomal subunit protein uS2 from Acidiphilium cryptum (strain JF-5).